Here is a 270-residue protein sequence, read N- to C-terminus: Small ribosomal subunit protein eS1 (270 aa).

Disordered stretches follow at residues 1–20 (MAVG…SKKK) and 238–270 (GGGK…QESV).

Belongs to the eukaryotic ribosomal protein eS1 family. Component of the small ribosomal subunit. Mature ribosomes consist of a small (40S) and a large (60S) subunit. The 40S subunit contains about 33 different proteins and 1 molecule of RNA (18S). The 60S subunit contains about 49 different proteins and 3 molecules of RNA (28S, 5.8S and 5S).

It is found in the cytoplasm. The sequence is that of Small ribosomal subunit protein eS1 from Culex quinquefasciatus (Southern house mosquito).